We begin with the raw amino-acid sequence, 355 residues long: Guanine nucleotide-binding protein subunit beta-5a (355 aa).

The tract at residues 1–23 (MAAQEEPAQPGDSLATLKSESDT) is disordered. 7 WD repeats span residues 63-102 (GHGNKVLCMDWCKDKRRIVSSSQDGKVIVWDAFTTNKEHA), 105-144 (MPCTWVMACAYAPSGCAVACGGLDNKCSVYPLSLDKNENL), 153-194 (MHTN…QSFH), 195-238 (GHAA…QSFE), 239-278 (SHDSDINSVRYYPSGDAFASGSDDATCRLYDLRADREVAI), 280-322 (SKES…RVSI), and 325-355 (GHENRVSTLRVSPDGTAFCSGSWDHTLRIWA).

Belongs to the WD repeat G protein beta family. May interact with RGS9; this interaction stabilizes both proteins and increases RGS9 GTPase-activating protein (GAP) activity, hence accelerating the deactivation of D(2) dopamine receptor-mediated signaling.

The protein resides in the membrane. In terms of biological role, enhances GTPase-activating protein (GAP) activity of regulator of G protein signaling (RGS) proteins, such as RGS7 and RGS9, hence involved in the termination of the signaling initiated by the G protein coupled receptors (GPCRs) by accelerating the GTP hydrolysis on the G-alpha subunits, thereby promoting their inactivation. Increases RGS7 GTPase-activating protein (GAP) activity, thereby regulating mood and cognition. Increases RGS9 GTPase-activating protein (GAP) activity, hence contributes to the deactivation of G protein signaling initiated by D(2) dopamine receptors. Along with gnb5b, plays an important role in neuronal signaling, including in the parasympathetic, but not sympathetic, control of heart rate. This Danio rerio (Zebrafish) protein is Guanine nucleotide-binding protein subunit beta-5a.